Reading from the N-terminus, the 883-residue chain is uncharacterized protein (883 aa).

Positions 258–373 (INNQSDNQSN…NQFNKPDNEP (116 aa)) are disordered. Low complexity-rich tracts occupy residues 259–268 (NNQSDNQSNS), 277–317 (EPNG…SNSE), and 324–333 (NEPNTEPNTE). Residues 334–347 (SNGQSNSELNNQSD) show a composition bias toward polar residues. Low complexity predominate over residues 348–368 (NHPNNEPNSEPNNEPNNQFNK).

Belongs to the mimivirus L137 family.

This is an uncharacterized protein from Acanthamoeba polyphaga mimivirus (APMV).